Here is a 223-residue protein sequence, read N- to C-terminus: UPF0441 protein YgiB (223 aa).

Over residues T178–T195 the composition is skewed to low complexity. A disordered region spans residues T178–G223. Polar residues predominate over residues A204–G223.

Belongs to the UPF0441 family.

The polypeptide is UPF0441 protein YgiB (Shigella boydii serotype 18 (strain CDC 3083-94 / BS512)).